Reading from the N-terminus, the 100-residue chain is uncharacterized protein (100 aa).

Residue Lys-98 forms an Isoglutamyl lysine isopeptide (Lys-Gln) (interchain with Q-Cter in protein Pup) linkage.

This is an uncharacterized protein from Mycobacterium tuberculosis (strain CDC 1551 / Oshkosh).